A 266-amino-acid chain; its full sequence is Probable septum site-determining protein MinC (266 aa).

Positions 98 to 146 (ILKGGRPVSDVDVPKVEPESPPAEEKKKTGKATKASGKSDEIGETDSPQ) are disordered. Positions 109–124 (DVPKVEPESPPAEEKK) are enriched in basic and acidic residues.

This sequence belongs to the MinC family. Interacts with MinD and FtsZ.

Cell division inhibitor that blocks the formation of polar Z ring septums. Rapidly oscillates between the poles of the cell to destabilize FtsZ filaments that have formed before they mature into polar Z rings. Prevents FtsZ polymerization. The polypeptide is Probable septum site-determining protein MinC (Allorhizobium ampelinum (strain ATCC BAA-846 / DSM 112012 / S4) (Agrobacterium vitis (strain S4))).